We begin with the raw amino-acid sequence, 121 residues long: NADH-quinone oxidoreductase subunit A 1 (121 aa).

3 consecutive transmembrane segments (helical) span residues phenylalanine 6 to glycine 26, leucine 62 to valine 82, and phenylalanine 90 to isoleucine 110.

The protein belongs to the complex I subunit 3 family. In terms of assembly, NDH-1 is composed of 14 different subunits. Subunits NuoA, H, J, K, L, M, N constitute the membrane sector of the complex.

It localises to the cell inner membrane. It carries out the reaction a quinone + NADH + 5 H(+)(in) = a quinol + NAD(+) + 4 H(+)(out). Functionally, NDH-1 shuttles electrons from NADH, via FMN and iron-sulfur (Fe-S) centers, to quinones in the respiratory chain. The immediate electron acceptor for the enzyme in this species is believed to be a menaquinone. Couples the redox reaction to proton translocation (for every two electrons transferred, four hydrogen ions are translocated across the cytoplasmic membrane), and thus conserves the redox energy in a proton gradient. This Chloroherpeton thalassium (strain ATCC 35110 / GB-78) protein is NADH-quinone oxidoreductase subunit A 1.